Reading from the N-terminus, the 157-residue chain is Alanyl-tRNA editing protein AlaX-S (157 aa).

4 residues coordinate Zn(2+): His9, His13, Cys116, and His120.

It belongs to the class-II aminoacyl-tRNA synthetase family. Editing domain AlaX-S subfamily. As to quaternary structure, monomer and homodimer; the dimer is less active in tRNA editing and does not have a zinc ion associated with it. Another report shows only a monomeric form. Zn(2+) is required as a cofactor.

The protein resides in the cytoplasm. Functions in trans to edit the amino acid moiety from mischarged charged Ser-tRNA(Ala). Has little activity against Gly-tRNA(Ala). The protein is Alanyl-tRNA editing protein AlaX-S (alaXS) of Pyrococcus horikoshii (strain ATCC 700860 / DSM 12428 / JCM 9974 / NBRC 100139 / OT-3).